A 450-amino-acid chain; its full sequence is UDP-N-acetylmuramoylalanine--D-glutamate ligase (450 aa).

119–125 contacts ATP; the sequence is GSNGKTT.

The protein belongs to the MurCDEF family.

It is found in the cytoplasm. It carries out the reaction UDP-N-acetyl-alpha-D-muramoyl-L-alanine + D-glutamate + ATP = UDP-N-acetyl-alpha-D-muramoyl-L-alanyl-D-glutamate + ADP + phosphate + H(+). It functions in the pathway cell wall biogenesis; peptidoglycan biosynthesis. Functionally, cell wall formation. Catalyzes the addition of glutamate to the nucleotide precursor UDP-N-acetylmuramoyl-L-alanine (UMA). This is UDP-N-acetylmuramoylalanine--D-glutamate ligase from Bacillus cereus (strain ATCC 10987 / NRS 248).